We begin with the raw amino-acid sequence, 135 residues long: Galectin-1 (135 aa).

Ala2 is modified (N-acetylalanine). In terms of domain architecture, Galectin spans 4-135 (GLVASNLNLK…DFKIKCVAFE (132 aa)). 3 positions are modified to N6-acetyllysine: Lys13, Lys19, and Lys29. Ser30 is modified (phosphoserine). Residues 45–49 (HFNPR), His53, Asn62, and 69–72 (WGAE) each bind a beta-D-galactoside. N6-acetyllysine is present on Lys128.

In terms of assembly, homodimer. Binds LGALS3BP. Interacts with CD2, CD3, CD4, CD6, CD7, CD43, ALCAM and CD45. Interacts with laminin (via poly-N-acetyllactosamine). Interacts with SUSD2. Interacts with cargo receptor TMED10; the interaction mediates the translocation from the cytoplasm into the ERGIC (endoplasmic reticulum-Golgi intermediate compartment) and thereby secretion.

The protein localises to the secreted. The protein resides in the extracellular space. It is found in the extracellular matrix. It localises to the cytoplasm. In terms of biological role, lectin that binds beta-galactoside and a wide array of complex carbohydrates. Plays a role in regulating apoptosis, cell proliferation and cell differentiation. Inhibits CD45 protein phosphatase activity and therefore the dephosphorylation of Lyn kinase. Strong inducer of T-cell apoptosis. The protein is Galectin-1 (LGALS1) of Sus scrofa (Pig).